The sequence spans 135 residues: Large ribosomal subunit protein uL16c (135 aa).

It belongs to the universal ribosomal protein uL16 family. In terms of assembly, part of the 50S ribosomal subunit.

The protein resides in the plastid. It localises to the chloroplast. This Lepidium virginicum (Virginia pepperweed) protein is Large ribosomal subunit protein uL16c.